A 118-amino-acid chain; its full sequence is UPF0342 protein ABC1519 (118 aa).

It belongs to the UPF0342 family.

In Shouchella clausii (strain KSM-K16) (Alkalihalobacillus clausii), this protein is UPF0342 protein ABC1519.